A 438-amino-acid chain; its full sequence is Fibrous sheath-interacting protein 1 (438 aa).

Residues 1–111 form a disordered region; sequence MSMDIIKGNL…PEHSDDPKLE (111 aa). The segment covering 18 to 32 has biased composition (low complexity); the sequence is SSSRSRPGSRSSNGS. Residues 53–72 are compositionally biased toward basic and acidic residues; it reads SGKEGHTSDSRVEERRKISD. Phosphoserine is present on residues Ser71, Ser88, and Ser89. A coiled-coil region spans residues 131 to 157; that stretch reads LAKRRIREKEIKKQGLEMRIKLWEELK. Positions 354–390 are disordered; sequence SQSNKGDMEHDSNEERNTEPTPGEKILRDNKEQRDRE. 2 stretches are compositionally biased toward basic and acidic residues: residues 359–371 and 378–390; these read GDME…ERNT and KILR…RDRE.

The protein belongs to the FSIP1 family.

This Rattus norvegicus (Rat) protein is Fibrous sheath-interacting protein 1 (Fsip1).